The chain runs to 230 residues: MTGSIRSKLSAIDVRQLGTVDYRTAWQLQRELADARVAGGADTLLLLEHPAVYTAGRRTETHERPIDGTPVVDTDRGGKITWHGPGQLVGYPIIGLAEPLDVVNYVRRLEESLIQVCADLGLHAGRVDGRSGVWLPGRPARKVAAIGVRVSRATTLHGFALNCDCDLAAFTAIVPCGISDAAVTSLSAELGRTVTVDEVRATVAAAVCAALDGVLPVGDRVPSHAVPSPL.

One can recognise a BPL/LPL catalytic domain in the interval 38 to 215 (AGGADTLLLL…AVCAALDGVL (178 aa)). Residues 76–83 (RGGKITWH), 145–147 (AIG), and 158–160 (GFA) contribute to the substrate site. The active-site Acyl-thioester intermediate is the C176.

It belongs to the LipB family.

It localises to the cytoplasm. It carries out the reaction octanoyl-[ACP] + L-lysyl-[protein] = N(6)-octanoyl-L-lysyl-[protein] + holo-[ACP] + H(+). Its pathway is protein modification; protein lipoylation via endogenous pathway; protein N(6)-(lipoyl)lysine from octanoyl-[acyl-carrier-protein]: step 1/2. Catalyzes the transfer of endogenously produced octanoic acid from octanoyl-acyl-carrier-protein onto the lipoyl domains of lipoate-dependent enzymes. Lipoyl-ACP can also act as a substrate although octanoyl-ACP is likely to be the physiological substrate. This is Octanoyltransferase from Mycobacterium tuberculosis (strain ATCC 25177 / H37Ra).